The following is a 472-amino-acid chain: UDP-glucuronosyltransferase (472 aa).

N-linked (GlcNAc...) asparagine glycans are attached at residues Asn-59, Asn-227, and Asn-377. Residues 436–456 form a helical membrane-spanning segment; it reads FGFILLILLTVLWVTLKCCLF.

The protein belongs to the UDP-glycosyltransferase family.

The protein resides in the microsome membrane. The protein localises to the endoplasmic reticulum membrane. It carries out the reaction glucuronate acceptor + UDP-alpha-D-glucuronate = acceptor beta-D-glucuronoside + UDP + H(+). In terms of biological role, UDPGT is of major importance in the conjugation and subsequent elimination of potentially toxic xenobiotics and endogenous compounds. This is UDP-glucuronosyltransferase (ugt3) from Pleuronectes platessa (European plaice).